The primary structure comprises 344 residues: Phosphate acyltransferase (344 aa).

This sequence belongs to the PlsX family. Homodimer. Probably interacts with PlsY.

Its subcellular location is the cytoplasm. The catalysed reaction is a fatty acyl-[ACP] + phosphate = an acyl phosphate + holo-[ACP]. It functions in the pathway lipid metabolism; phospholipid metabolism. Functionally, catalyzes the reversible formation of acyl-phosphate (acyl-PO(4)) from acyl-[acyl-carrier-protein] (acyl-ACP). This enzyme utilizes acyl-ACP as fatty acyl donor, but not acyl-CoA. In Cyanothece sp. (strain PCC 7425 / ATCC 29141), this protein is Phosphate acyltransferase.